A 564-amino-acid chain; its full sequence is Zyxin (564 aa).

Residue Ala2 is modified to N-acetylalanine. Positions 30-141 (VAPKPKVNPF…TQLPPQPREK (112 aa)) are disordered. Composition is skewed to pro residues over residues 63–78 (IPPP…PPPL) and 93–109 (FPPP…PPAP). Residues Ser117, Ser144, Ser170, and Ser171 each carry the phosphoserine modification. The interval 162 to 344 (NDPFKARVSS…RSPGGPGPLT (183 aa)) is disordered. 2 stretches are compositionally biased toward pro residues: residues 174–189 (VPPP…PSTK) and 197–214 (PLPP…PQPQ). At Thr180 the chain carries Phosphothreonine. Residues 234 to 243 (QPVSSANTQP) are compositionally biased toward polar residues. At Arg244 the chain carries Asymmetric dimethylarginine. Residues 255 to 275 (PKFAPVAPKFTPVVSKFSPGA) are compositionally biased toward low complexity. Lys256 and Lys263 each carry N6-acetyllysine. Thr265 carries the phosphothreonine modification. Lys270 bears the N6-acetyllysine mark. Ser272 and Ser300 each carry phosphoserine. Residues 294 to 310 (SSVSTGSPQPPSFTYAQ) show a composition bias toward polar residues. Residues 311 to 322 (QKEKPLVQEKQH) show a composition bias toward basic and acidic residues. Residue Ser336 is modified to Phosphoserine. LIM zinc-binding domains follow at residues 376–435 (CGKC…TLEK), 436–495 (CNTC…YAPR), and 496–562 (CSVC…SARA).

The protein belongs to the zyxin/ajuba family. In terms of assembly, interacts, via the Pro-rich regions, with the EVH1 domains of ENAH, EVL and VASP. Interacts with the first LIM domain of TES. Interacts with SYNPO2.

It localises to the cytoplasm. The protein localises to the cytoskeleton. The protein resides in the cell junction. Its subcellular location is the focal adhesion. It is found in the nucleus. Adhesion plaque protein. Binds alpha-actinin and the CRP protein. Important for targeting TES and ENA/VASP family members to focal adhesions and for the formation of actin-rich structures. May be a component of a signal transduction pathway that mediates adhesion-stimulated changes in gene expression. The sequence is that of Zyxin (Zyx) from Mus musculus (Mouse).